Consider the following 191-residue polypeptide: NF-kappa-B inhibitor-interacting Ras-like protein 2 (191 aa).

A small GTPase-like region spans residues 1-191; sequence MGKSCKVVVC…KNKGSGSVDG (191 aa). A GTP-binding site is contributed by 11–18; the sequence is GQAAVGKT. The short motif at 35–43 is the Effector region element; it reads MIETQEDIY. GTP-binding positions include 61-65 and 120-123; these read DTRGL and NKCD. The interval 170–191 is disordered; sequence QPQSKSAFPLSRKNKGSGSVDG.

The protein belongs to the small GTPase superfamily. Ras family. KappaB-Ras subfamily.

It localises to the cytoplasm. In terms of biological role, atypical Ras-like protein that acts as a potent regulator of NF-kappa-B activity by preventing the degradation of NF-kappa-B inhibitor beta (NFKBIB) by most signals, explaining why NFKBIB is more resistant to degradation. This Gallus gallus (Chicken) protein is NF-kappa-B inhibitor-interacting Ras-like protein 2 (NKIRAS2).